The chain runs to 58 residues: Large ribosomal subunit protein bL32 (58 aa).

It belongs to the bacterial ribosomal protein bL32 family.

In Ligilactobacillus salivarius (strain UCC118) (Lactobacillus salivarius), this protein is Large ribosomal subunit protein bL32.